Reading from the N-terminus, the 222-residue chain is Coiled-coil domain-containing protein 43 (222 aa).

A Glycyl lysine isopeptide (Lys-Gly) (interchain with G-Cter in SUMO1) cross-link involves residue Lys-93. A coiled-coil region spans residues 119–143 (SEEEKQRKAALLAQYADVTDEEDEA). A disordered region spans residues 136 to 222 (VTDEEDEADK…KRTQKGERKR (87 aa)). A Phosphothreonine modification is found at Thr-137. A compositionally biased stretch (polar residues) spans 152–168 (STANVSSDRTLFRNTNV). A compositionally biased stretch (basic and acidic residues) spans 172–209 (LNARKLERDSLRDESQRKKEQDKLQREKDKLAKQERKE). A coiled-coil region spans residues 175–217 (RKLERDSLRDESQRKKEQDKLQREKDKLAKQERKEKEKKRTQK). Residues 210–222 (KEKKRTQKGERKR) show a composition bias toward basic residues.

It belongs to the CCDC43 family.

The sequence is that of Coiled-coil domain-containing protein 43 (Ccdc43) from Mus musculus (Mouse).